A 315-amino-acid chain; its full sequence is 4-diphosphocytidyl-2-C-methyl-D-erythritol kinase (315 aa).

K10 is an active-site residue. Position 107–117 (107–117) interacts with ATP; it reads PVAGGMAGGSA. D148 is an active-site residue. The disordered stretch occupies residues 292–315; the sequence is HPATSPVPGPAKNRGAHIVSIESE.

It belongs to the GHMP kinase family. IspE subfamily.

The catalysed reaction is 4-CDP-2-C-methyl-D-erythritol + ATP = 4-CDP-2-C-methyl-D-erythritol 2-phosphate + ADP + H(+). The protein operates within isoprenoid biosynthesis; isopentenyl diphosphate biosynthesis via DXP pathway; isopentenyl diphosphate from 1-deoxy-D-xylulose 5-phosphate: step 3/6. In terms of biological role, catalyzes the phosphorylation of the position 2 hydroxy group of 4-diphosphocytidyl-2C-methyl-D-erythritol. The chain is 4-diphosphocytidyl-2-C-methyl-D-erythritol kinase from Corynebacterium efficiens (strain DSM 44549 / YS-314 / AJ 12310 / JCM 11189 / NBRC 100395).